Reading from the N-terminus, the 260-residue chain is Phosphate import ATP-binding protein PstB 1 (260 aa).

The ABC transporter domain occupies 13 to 255; that stretch reads ISARDLNVHY…PQHPLTQGYI (243 aa). 45–52 contacts ATP; it reads GPSGCGKS.

It belongs to the ABC transporter superfamily. Phosphate importer (TC 3.A.1.7) family. As to quaternary structure, the complex is composed of two ATP-binding proteins (PstB), two transmembrane proteins (PstC and PstA) and a solute-binding protein (PstS).

It localises to the cell inner membrane. The catalysed reaction is phosphate(out) + ATP + H2O = ADP + 2 phosphate(in) + H(+). Part of the ABC transporter complex PstSACB involved in phosphate import. Responsible for energy coupling to the transport system. The polypeptide is Phosphate import ATP-binding protein PstB 1 (Paramagnetospirillum magneticum (strain ATCC 700264 / AMB-1) (Magnetospirillum magneticum)).